A 159-amino-acid chain; its full sequence is Regulatory protein RecX (159 aa).

Belongs to the RecX family.

It localises to the cytoplasm. In terms of biological role, modulates RecA activity. The polypeptide is Regulatory protein RecX (Ralstonia pickettii (strain 12J)).